The following is a 237-amino-acid chain: Large ribosomal subunit protein uL1 (237 aa).

The protein belongs to the universal ribosomal protein uL1 family. In terms of assembly, part of the 50S ribosomal subunit.

In terms of biological role, binds directly to 23S rRNA. The L1 stalk is quite mobile in the ribosome, and is involved in E site tRNA release. Protein L1 is also a translational repressor protein, it controls the translation of the L11 operon by binding to its mRNA. The protein is Large ribosomal subunit protein uL1 of Synechococcus elongatus (strain ATCC 33912 / PCC 7942 / FACHB-805) (Anacystis nidulans R2).